We begin with the raw amino-acid sequence, 108 residues long: Movement protein TGB2 (108 aa).

Residues 1–8 (MPLTPPPN) lie on the Cytoplasmic side of the membrane. The helical transmembrane segment at 9–29 (YTGLYIAAALGVSLAAVVALF) threads the bilayer. The Lumenal portion of the chain corresponds to 30-72 (TRSTLPIVGDSQHNLPHGGRYRDGTKAIDYFKPTKLNSVEPGN). Residues 73–93 (YWYTQPWLLVILLVALICLSG) form a helical membrane-spanning segment. At 94–108 (RHAQCCPRCNRVHSA) the chain is on the cytoplasmic side.

The protein belongs to the Tymovirales TGBp2 protein family.

The protein localises to the host endoplasmic reticulum membrane. In terms of biological role, plays a role in viral cell-to-cell propagation, by facilitating genome transport to neighboring plant cells through plasmosdesmata,. This Solanum tuberosum (Potato) protein is Movement protein TGB2.